The sequence spans 668 residues: Protein-glutamine gamma-glutamyltransferase (668 aa).

The Cytoplasmic segment spans residues 1-6; that stretch reads MNAIPR. A helical transmembrane segment spans residues 7 to 27; that stretch reads VALVWLLVAQVLVILPHLAYM. Residues 28 to 50 are Periplasmic-facing; the sequence is PLWIAAMWLGCAAWRVQVFRMRA. The helical transmembrane segment at 51-71 threads the bilayer; sequence GYPRAWVKLALALLAGAGVWL. The Cytoplasmic portion of the chain corresponds to 72–74; sequence SRG. The helical transmembrane segment at 75 to 95 threads the bilayer; sequence SLVGLDAGAVLLIAAFILKLV. Over 96 to 103 the chain is Periplasmic; sequence EMKTRRDA. Helical transmembrane passes span 104–124 and 125–145; these read LVLV…DDGF and LAAL…IGLQ. Over 146 to 158 the chain is Cytoplasmic; the sequence is QSAFASRPWPTLR. The chain crosses the membrane as a helical span at residues 159-179; it reads LAGGLLLQALPLMLLLFLFFP. The Periplasmic segment spans residues 180–548; that stretch reads RLGPLWSLPM…FGGLDPTRLG (369 aa). The active-site Nucleophile is the C404. Catalysis depends on residues H448 and D464. Residues 549–569 traverse the membrane as a helical segment; the sequence is LLLGAAAILSVGLLALFLLKP. Topologically, residues 570-668 are cytoplasmic; that stretch reads WQGRGDLRSR…TRDGRGEEQA (99 aa).

It belongs to the transglutaminase-like superfamily.

It localises to the cell inner membrane. The enzyme catalyses L-glutaminyl-[protein] + L-lysyl-[protein] = [protein]-L-lysyl-N(6)-5-L-glutamyl-[protein] + NH4(+). In terms of biological role, displays transglutaminase activity (TGase) in vitro. Plays a critical role in the viability of P.aeruginosa. Might contribute to an essential function linked to the cell wall. The chain is Protein-glutamine gamma-glutamyltransferase (tgpA) from Pseudomonas aeruginosa (strain ATCC 15692 / DSM 22644 / CIP 104116 / JCM 14847 / LMG 12228 / 1C / PRS 101 / PAO1).